Here is a 406-residue protein sequence, read N- to C-terminus: MNGFAVIPSVTTTTTSGEPIAGDVARKQNLLELNREGLERFFENVLGEKRYRAHQVMKWIHHRYVSDFEQMTDVGKALRARLQACAEVRVPCVVFDKHSADGTHKWLLAMDTDSKNAIETVYIPDKGRGTLCVSSQIGCGLNCTFCSTATQGFNRNLTTAEIIGQVWVAARHLGNVPHQQRRLTNVVMMGMGEPLMNFDNVVRAMSVMRDDLGYGLSNKRVTLSTSGLVPMIDRLSTESDVSLAVSLHAPNDKLREQLVPLNKKYPIAELMASCERYLSVNRKRDSVTFEYTLMKGVNDKQEHAHELVKLMRQFDCAMQVKGAAKVNLIPFNPFPGTYYERSTEVDIRAFQKILLDAQILAMVRRTRGDDIDAACGQLKGQVVDRTRRQAEFRRTIEDRVGRDVAA.

Glu119 serves as the catalytic Proton acceptor. One can recognise a Radical SAM core domain in the interval 125–370 (DKGRGTLCVS…AMVRRTRGDD (246 aa)). The cysteines at positions 132 and 375 are disulfide-linked. Cys139, Cys143, and Cys146 together coordinate [4Fe-4S] cluster. S-adenosyl-L-methionine contacts are provided by residues 192-193 (GE), Ser224, 246-248 (SLH), and Asn332. The active-site S-methylcysteine intermediate is the Cys375.

It belongs to the radical SAM superfamily. RlmN family. Requires [4Fe-4S] cluster as cofactor.

Its subcellular location is the cytoplasm. It catalyses the reaction adenosine(2503) in 23S rRNA + 2 reduced [2Fe-2S]-[ferredoxin] + 2 S-adenosyl-L-methionine = 2-methyladenosine(2503) in 23S rRNA + 5'-deoxyadenosine + L-methionine + 2 oxidized [2Fe-2S]-[ferredoxin] + S-adenosyl-L-homocysteine. The enzyme catalyses adenosine(37) in tRNA + 2 reduced [2Fe-2S]-[ferredoxin] + 2 S-adenosyl-L-methionine = 2-methyladenosine(37) in tRNA + 5'-deoxyadenosine + L-methionine + 2 oxidized [2Fe-2S]-[ferredoxin] + S-adenosyl-L-homocysteine. Its function is as follows. Specifically methylates position 2 of adenine 2503 in 23S rRNA and position 2 of adenine 37 in tRNAs. m2A2503 modification seems to play a crucial role in the proofreading step occurring at the peptidyl transferase center and thus would serve to optimize ribosomal fidelity. This Xylella fastidiosa (strain 9a5c) protein is Dual-specificity RNA methyltransferase RlmN.